The primary structure comprises 131 residues: RxLR effector protein 62 (131 aa).

Residues 1–19 (MRLDILLFTLSSSTSLALS) form the signal peptide. Positions 49 to 60 (RHLREEPANEAR) match the RxLR-dEER motif. An N-linked (GlcNAc...) asparagine glycan is attached at Asn-61.

The protein belongs to the RxLR effector family.

Its subcellular location is the secreted. It localises to the host cell. Secreted effector that suppresses callose deposition, a hallmark of pathogen-associated molecular pattern (PAMP)-triggered immunity (PTI) and renders host plants more susceptible to bacterial infection. Reduces host plant responsiveness to salicylic acid (SA) in haustoriated cells into which host-translocated effectors are delivered. This is RxLR effector protein 62 from Hyaloperonospora arabidopsidis (strain Emoy2) (Downy mildew agent).